The primary structure comprises 297 residues: ATP synthase subunit a (297 aa).

The next 8 membrane-spanning stretches (helical) occupy residues 38–58 (PLIP…IAIL), 77–97 (GYVL…VDLL), 107–127 (LFII…VGGI), 133–153 (SSTV…IMGV), 174–194 (TIPL…LLSI), 202–222 (VLAG…FFTL), 230–250 (VGLV…HVYF), and 252–272 (ILVS…YWSQ).

This sequence belongs to the ATPase A chain family. F-type ATPases have 2 components, CF(1) - the catalytic core - and CF(0) - the membrane proton channel. CF(1) has five subunits: alpha(3), beta(3), gamma(1), delta(1), epsilon(1). CF(0) has three main subunits: a(1), b(2) and c(9-12). The alpha and beta chains form an alternating ring which encloses part of the gamma chain. CF(1) is attached to CF(0) by a central stalk formed by the gamma and epsilon chains, while a peripheral stalk is formed by the delta and b chains.

It is found in the cell membrane. In terms of biological role, key component of the proton channel; it plays a direct role in the translocation of protons across the membrane. The polypeptide is ATP synthase subunit a (Mycoplasmoides gallisepticum (strain R(low / passage 15 / clone 2)) (Mycoplasma gallisepticum)).